A 229-amino-acid chain; its full sequence is uncharacterized protein (229 aa).

7 consecutive transmembrane segments (helical) span residues 6–26 (LFFV…FLPT), 36–56 (LVSV…ILLA), 80–99 (SVYD…HRIY), 114–134 (VLSV…HLII), 144–164 (IFEY…ATML), 174–194 (FYYH…IYKF), and 207–224 (YVEA…VLSS).

This sequence belongs to the mimivirus L68/R809 family.

Its subcellular location is the membrane. This is an uncharacterized protein from Acanthamoeba polyphaga (Amoeba).